The following is an 854-amino-acid chain: Envelope glycoprotein gp160 (854 aa).

The N-terminal stretch at Met1–Gly20 is a signal peptide. Topologically, residues Asn21–Val705 are extracellular. N-linked (GlcNAc...) asparagine; by host glycosylation is present at Asn35. The cysteines at positions 42 and 55 are disulfide-linked. N-linked (GlcNAc...) asparagine; by host glycans are attached at residues Asn68, Asn115, Asn136, Asn153, Asn168, Asn182, and Asn199. 5 disulfide bridges follow: Cys99-Cys207, Cys106-Cys198, Cys111-Cys154, Cys220-Cys250, and Cys230-Cys242. Residues Cys111 to Asn153 are V1. A V2 region spans residues Cys154–Cys198. N-linked (GlcNAc...) asparagine; by host glycans are attached at residues Asn244, Asn255, Asn265, Asn271, Asn283, Asn295, Asn305, Asn355, Asn400, Asn409, Asn458, Asn472, and Asn478. A V3 region spans residues Cys300–Trp332. A disulfide bridge links Cys300 with Cys333. 2 disulfide bridges follow: Cys382-Cys457 and Cys389-Cys430. The segment at Cys389 to Cys430 is V4. The V5 stretch occupies residues Lys473–Leu481. The interval Val523 to Ala543 is fusion peptide. Residues Leu586–Arg602 form an immunosuppression region. Residues Asn630 and Asn646 are each glycosylated (N-linked (GlcNAc...) asparagine; by host). A coiled-coil region spans residues Trp633–Ser672. The interval Lys667–Lys688 is MPER; binding to GalCer. The chain crosses the membrane as a helical span at residues Leu706–His726. The short motif at Tyr717–Leu720 is the YXXL motif; contains endocytosis signal element. Residues Ser727–Gly854 lie on the Cytoplasmic side of the membrane.

As to quaternary structure, the mature envelope protein (Env) consists of a homotrimer of non-covalently associated gp120-gp41 heterodimers. The resulting complex protrudes from the virus surface as a spike. Interacts with host CD4 and CCR5. Gp120 also interacts with the C-type lectins CD209/DC-SIGN and CLEC4M/DC-SIGNR (collectively referred to as DC-SIGN(R)). The mature envelope protein (Env) consists of a homotrimer of non-covalently associated gp120-gp41 heterodimers. The resulting complex protrudes from the virus surface as a spike. Post-translationally, specific enzymatic cleavages in vivo yield mature proteins. Envelope glycoproteins are synthesized as an inactive precursor that is heavily N-glycosylated and processed likely by host cell furin in the Golgi to yield the mature SU and TM proteins. The cleavage site between SU and TM requires the minimal sequence [KR]-X-[KR]-R.

Its subcellular location is the virion membrane. It is found in the host cell membrane. It localises to the host endosome membrane. The surface protein gp120 (SU) attaches the virus to the host lymphoid cell by binding to the primary receptor CD4. This interaction induces a structural rearrangement creating a high affinity binding site for a chemokine coreceptor like CCR5. This peculiar 2 stage receptor-interaction strategy allows gp120 to maintain the highly conserved coreceptor-binding site in a cryptic conformation, protected from neutralizing antibodies. These changes are transmitted to the transmembrane protein gp41 and are thought to activate its fusogenic potential by unmasking its fusion peptide. In terms of biological role, surface protein gp120 (SU) may target the virus to gut-associated lymphoid tissue (GALT) by binding host ITGA4/ITGB7 (alpha-4/beta-7 integrins), a complex that mediates T-cell migration to the GALT. Interaction between gp120 and ITGA4/ITGB7 would allow the virus to enter GALT early in the infection, infecting and killing most of GALT's resting CD4+ T-cells. This T-cell depletion is believed to be the major insult to the host immune system leading to AIDS. Functionally, the surface protein gp120 is a ligand for CD209/DC-SIGN and CLEC4M/DC-SIGNR, which are respectively found on dendritic cells (DCs), and on endothelial cells of liver sinusoids and lymph node sinuses. These interactions allow capture of viral particles at mucosal surfaces by these cells and subsequent transmission to permissive cells. DCs are professional antigen presenting cells, critical for host immunity by inducing specific immune responses against a broad variety of pathogens. They act as sentinels in various tissues where they take up antigen, process it, and present it to T-cells following migration to lymphoid organs. SIV subverts the migration properties of dendritic cells to gain access to CD4+ T-cells in lymph nodes. Virus transmission to permissive T-cells occurs either in trans (without DCs infection, through viral capture and transmission), or in cis (following DCs productive infection, through the usual CD4-gp120 interaction), thereby inducing a robust infection. In trans infection, bound virions remain infectious over days and it is proposed that they are not degraded, but protected in non-lysosomal acidic organelles within the DCs close to the cell membrane thus contributing to the viral infectious potential during DCs' migration from the periphery to the lymphoid tissues. On arrival at lymphoid tissues, intact virions recycle back to DCs' cell surface allowing virus transmission to CD4+ T-cells. Virion capture also seems to lead to MHC-II-restricted viral antigen presentation, and probably to the activation of SIV-specific CD4+ cells. Its function is as follows. The transmembrane protein gp41 (TM) acts as a class I viral fusion protein. Under the current model, the protein has at least 3 conformational states: pre-fusion native state, pre-hairpin intermediate state, and post-fusion hairpin state. During fusion of viral and target intracellular membranes, the coiled coil regions (heptad repeats) assume a trimer-of-hairpins structure, positioning the fusion peptide in close proximity to the C-terminal region of the ectodomain. The formation of this structure appears to drive apposition and subsequent fusion of viral and target cell membranes. Complete fusion occurs in host cell endosomes. The virus undergoes clathrin-dependent internalization long before endosomal fusion, thus minimizing the surface exposure of conserved viral epitopes during fusion and reducing the efficacy of inhibitors targeting these epitopes. Membranes fusion leads to delivery of the nucleocapsid into the cytoplasm. The envelope glycoprotein gp160 precursor down-modulates cell surface CD4 antigen by interacting with it in the endoplasmic reticulum and blocking its transport to the cell surface. In terms of biological role, the gp120-gp41 heterodimer allows rapid transcytosis of the virus through CD4 negative cells such as simple epithelial monolayers of the intestinal, rectal and endocervical epithelial barriers. Both gp120 and gp41 specifically recognize glycosphingolipids galactosyl-ceramide (GalCer) or 3' sulfo-galactosyl-ceramide (GalS) present in the lipid rafts structures of epithelial cells. Binding to these alternative receptors allows the rapid transcytosis of the virus through the epithelial cells. This transcytotic vesicle-mediated transport of virions from the apical side to the basolateral side of the epithelial cells does not involve infection of the cells themselves. The chain is Envelope glycoprotein gp160 (env) from Cercopithecidae (Old World monkeys).